The sequence spans 244 residues: DNA repair protein RecO (244 aa).

This sequence belongs to the RecO family.

Involved in DNA repair and RecF pathway recombination. The polypeptide is DNA repair protein RecO (Myxococcus xanthus (strain DK1622)).